Here is a 1112-residue protein sequence, read N- to C-terminus: Constitutive coactivator of PPAR-gamma-like protein 1 (1112 aa).

Residues Pro-339 to Leu-403 form an interaction with YES1, SRC and FYN region. The interval Gln-372–Gln-525 is disordered. Polar residues-rich tracts occupy residues Leu-403–Asn-418 and Ser-433–His-445. Residues Gly-479 to Lys-500 show a composition bias toward basic and acidic residues. Residues Gly-503–Gln-512 are compositionally biased toward polar residues. At Thr-653 the chain carries Phosphothreonine. The interval Ala-827–Glu-1112 is RNA binding. Omega-N-methylarginine is present on residues Arg-871, Arg-882, and Arg-884. The disordered stretch occupies residues Ala-919 to Gly-943. Positions Gly-922–Gly-934 are enriched in polar residues. Lys-930 is subject to N6-acetyllysine. Ser-958 bears the Phosphoserine mark. An omega-N-methylarginine mark is found at Arg-980 and Arg-984. Ser-1021 and Ser-1042 each carry phosphoserine. The disordered stretch occupies residues Lys-1030–Ala-1090. Residues His-1070–Ala-1090 show a composition bias toward polar residues.

Belongs to the constitutive coactivator of PPAR-gamma family. In terms of assembly, interacts with PURA. Interacts with SRC family protein kinases YES1, SRC and FYN. Upon tyrosine phosphorylation, interacts with PIK3R1. Interacts with IGF2BP1/IMP-1 in an RNA-dependent manner. Post-translationally, arg-980 is dimethylated, probably to asymmetric dimethylarginine. Phosphorylated on tyrosine by src family kinases upon ultraviolet exposure. In terms of tissue distribution, in the brain, predominantly expressed in the hippocampus, caudate putamen, cerebral cortex and cerebellum. Expression is restricted to neurons (at protein level).

It localises to the cytoplasm. The protein localises to the cell membrane. In terms of biological role, component of the oxidative stress-induced survival signaling. May regulate the activation of SRC family protein kinases. May act as a scaffolding protein enabling SRC family protein kinases to phosphorylate and activate PI3-kinase. Binds IGF2 RNA and promotes the production of IGF2 protein. The chain is Constitutive coactivator of PPAR-gamma-like protein 1 (FAM120A) from Mus musculus (Mouse).